The chain runs to 129 residues: Capsid protein (129 aa).

The segment at 31–104 is viral RNA-binding; sequence EWISSNSRSQ…FATNSDCELI (74 aa).

The protein belongs to the Leviviricetes capsid protein family. As to quaternary structure, homodimer. The capsid proteins form dimers that assemble by group of 5. Twelve such pentamers are linked together with free dimers. The homodimers binds to the viral RNA via an operator hairpin, but also to many other RNA sequences in the viral genome; this interaction probably shifts the virus from the replicative to the assembly phase and ensures specific encapsidation of the viral genome.

It localises to the virion. Functionally, capsid protein self-assembles to form an icosahedral capsid with a T=3 symmetry, about 26 nm in diameter, and consisting of 89 capsid proteins dimers (178 capsid proteins). Involved in viral genome encapsidation through the interaction between a capsid protein dimer and the multiple packaging signals present in the RNA genome. The capsid also contains 1 copy of the A2 maturation protein. Its function is as follows. Acts as a translational repressor of viral replicase synthesis late in infection. This latter function is the result of capsid protein interaction with an RNA hairpin which contains the replicase ribosome-binding site. In Escherichia coli (Bacteriophage R17), this protein is Capsid protein.